The primary structure comprises 74 residues: Conotoxin AbVIL (74 aa).

An N-terminal signal peptide occupies residues 1 to 17 (VLIIAVLFLTACQLTTA). Residues 17–41 (AETSSRGEQKHRAPRSTDKNSRMTK) form a disordered region. A propeptide spanning residues 18-40 (ETSSRGEQKHRAPRSTDKNSRMT) is cleaved from the precursor. The span at 21-37 (SRGEQKHRAPRSTDKNS) shows a compositional bias: basic and acidic residues. Intrachain disulfides connect cysteine 43-cysteine 57, cysteine 50-cysteine 61, and cysteine 56-cysteine 68.

Belongs to the conotoxin O1 superfamily. As to expression, expressed by the venom duct.

It is found in the secreted. In Conus abbreviatus (Abbreviated cone), this protein is Conotoxin AbVIL.